The sequence spans 163 residues: NADH-quinone oxidoreductase subunit I (163 aa).

2 4Fe-4S ferredoxin-type domains span residues Leu53 to Gly83 and Val94 to Asn123. Cys63, Cys66, Cys69, Cys73, Cys103, Cys106, Cys109, and Cys113 together coordinate [4Fe-4S] cluster.

The protein belongs to the complex I 23 kDa subunit family. As to quaternary structure, NDH-1 is composed of 14 different subunits. Subunits NuoA, H, J, K, L, M, N constitute the membrane sector of the complex. It depends on [4Fe-4S] cluster as a cofactor.

The protein resides in the cell inner membrane. It carries out the reaction a quinone + NADH + 5 H(+)(in) = a quinol + NAD(+) + 4 H(+)(out). NDH-1 shuttles electrons from NADH, via FMN and iron-sulfur (Fe-S) centers, to quinones in the respiratory chain. The immediate electron acceptor for the enzyme in this species is believed to be ubiquinone. Couples the redox reaction to proton translocation (for every two electrons transferred, four hydrogen ions are translocated across the cytoplasmic membrane), and thus conserves the redox energy in a proton gradient. The polypeptide is NADH-quinone oxidoreductase subunit I (Rhizobium johnstonii (strain DSM 114642 / LMG 32736 / 3841) (Rhizobium leguminosarum bv. viciae)).